A 234-amino-acid polypeptide reads, in one-letter code: UPF0758 protein Smal_0281 (234 aa).

The 123-residue stretch at 103 to 225 (VGNNPAAVGR…PVSFAERGLL (123 aa)) folds into the MPN domain. Residues histidine 174, histidine 176, and aspartate 187 each coordinate Zn(2+). The JAMM motif motif lies at 174-187 (HNHPSGDPEPSSAD).

It belongs to the UPF0758 family.

This Stenotrophomonas maltophilia (strain R551-3) protein is UPF0758 protein Smal_0281.